Consider the following 593-residue polypeptide: Autophagy-related protein 22-2 (593 aa).

The chain crosses the membrane as a helical span at residues 42–62 (YGVAAEVFAVCGVGSFLPLTL). Asn-90 carries N-linked (GlcNAc...) asparagine glycosylation. The next 3 helical transmembrane spans lie at 112–132 (SFAM…LVSF), 159–179 (LFML…VIGV), and 181–201 (CLGS…ANDP). A disordered region spans residues 228–261 (SWTDEEDTGDHAGPAGSKKAVEPEKASSSTSPEL). A run of 4 helical transmembrane segments spans residues 271-291 (GVGL…LLLF), 305-325 (LPLR…TVVC), 377-397 (VVVF…VSGT), and 415-435 (LLSI…PIVA). N-linked (GlcNAc...) asparagine glycosylation occurs at Asn-443. 4 consecutive transmembrane segments (helical) span residues 448–468 (LCIA…IPFI), 480–500 (WEIF…ASYC), 525–545 (KGSS…TGSV), and 548–568 (GFIF…LVNA).

The protein belongs to the ATG22 family.

The protein resides in the vacuole membrane. Its function is as follows. Vacuolar effluxer which mediate the efflux of amino acids resulting from autophagic degradation. The release of autophagic amino acids allows the maintenance of protein synthesis and viability during nitrogen starvation. This chain is Autophagy-related protein 22-2 (atg22-2), found in Emericella nidulans (strain FGSC A4 / ATCC 38163 / CBS 112.46 / NRRL 194 / M139) (Aspergillus nidulans).